A 741-amino-acid polypeptide reads, in one-letter code: Cysteine--tRNA ligase, cytoplasmic (741 aa).

Residue Cys46 participates in Zn(2+) binding. The short motif at 48 to 58 is the 'HIGH' region element; that stretch reads PTVYDASHMGH. Ser297 carries the phosphoserine modification. Zn(2+)-binding residues include Cys340, His365, and Glu369. Residues 398–402 carry the 'KMSKS' region motif; sequence KMSKS. Residue Lys401 coordinates ATP. The disordered stretch occupies residues 697-718; that stretch reads FDENGLPTHDKEGKEVSKGQIK. Residues 704 to 713 show a composition bias toward basic and acidic residues; the sequence is THDKEGKEVS.

This sequence belongs to the class-I aminoacyl-tRNA synthetase family. It depends on Zn(2+) as a cofactor.

It is found in the cytoplasm. It carries out the reaction tRNA(Cys) + L-cysteine + ATP = L-cysteinyl-tRNA(Cys) + AMP + diphosphate. This chain is Cysteine--tRNA ligase, cytoplasmic, found in Drosophila melanogaster (Fruit fly).